Consider the following 188-residue polypeptide: Adrenodoxin, mitochondrial (188 aa).

The N-terminal 64 residues, 1–64, are a transit peptide targeting the mitochondrion; it reads MAAAPGARLL…RPLSVSARAR (64 aa). Ser67 carries the phosphoserine modification. The 107-residue stretch at 69–175 folds into the 2Fe-2S ferredoxin-type domain; that stretch reads DKVTVHFKNR…NMTVRVPEAV (107 aa). Lys70 carries the N6-acetyllysine; alternate modification. Lys70 bears the N6-succinyllysine; alternate mark. Positions 110, 116, 119, and 156 each coordinate [2Fe-2S] cluster. The residue at position 162 (Lys162) is an N6-succinyllysine. Phosphoserine is present on Ser181.

Belongs to the adrenodoxin/putidaredoxin family. In terms of assembly, interacts with CYP11A1. Requires [2Fe-2S] cluster as cofactor. As to expression, found in all tissues, most abundant in adrenals, ovaries and testes.

The protein resides in the mitochondrion matrix. In terms of biological role, essential for the synthesis of various steroid hormones. Participates in the reduction of mitochondrial cytochrome P450 for steroidogenesis. Transfers electrons from adrenodoxin reductase to CYP11A1, a cytochrome P450 that catalyzes cholesterol side-chain cleavage. Does not form a ternary complex with adrenodoxin reductase and CYP11A1 but shuttles between the two enzymes to transfer electrons. This is Adrenodoxin, mitochondrial (Fdx1) from Rattus norvegicus (Rat).